The following is a 517-amino-acid chain: Rop guanine nucleotide exchange factor 9 (517 aa).

Disordered regions lie at residues 16 to 76 and 428 to 517; these read NLDR…SETE and GEET…KDRH. Polar residues predominate over residues 39-63; that stretch reads MPESQTQDSLGGSPVETSRPMTSRL. The PRONE domain occupies 65–429; the sequence is SRRQDKQQSE…SLARKQCTGE (365 aa). Basic and acidic residues predominate over residues 66–76; it reads RRQDKQQSETE. Residues 440–452 are compositionally biased toward polar residues; it reads ETDSASAGSSNYS.

As to quaternary structure, interacts with ARAC11/ROP1 and ARAC10/ROP11. Interacts with PRK6. In terms of tissue distribution, expressed in pollen grains and pollen tubes.

The protein resides in the cell membrane. In terms of biological role, guanine-nucleotide exchange factor (GEF) that acts as an activator of Rop (Rho of plants) GTPases by promoting the exchange of GDP for GTP. This Arabidopsis thaliana (Mouse-ear cress) protein is Rop guanine nucleotide exchange factor 9.